A 107-amino-acid polypeptide reads, in one-letter code: Prokineticin-2 (107 aa).

Residues 1–26 (MEDPRCAPLLLLLLLPLLLTPPAGDA) form the signal peptide. 5 disulfides stabilise this stretch: C33/C45, C39/C57, C44/C85, C67/C93, and C87/C103.

This sequence belongs to the AVIT (prokineticin) family. Expressed at high levels in testis and at lower levels in brain, lung, ovary, spleen, thymus and uterus.

It is found in the secreted. Its function is as follows. May function as an output molecule from the suprachiasmatic nucleus (SCN) that transmits behavioral circadian rhythm. May also function locally within the SCN to synchronize output. Potently contracts gastrointestinal (GI) smooth muscle. The protein is Prokineticin-2 (Prok2) of Rattus norvegicus (Rat).